The chain runs to 92 residues: DNA-directed RNA polymerase subunit omega (92 aa).

This sequence belongs to the RNA polymerase subunit omega family. In terms of assembly, the RNAP catalytic core consists of 2 alpha, 1 beta, 1 beta' and 1 omega subunit. When a sigma factor is associated with the core the holoenzyme is formed, which can initiate transcription.

It catalyses the reaction RNA(n) + a ribonucleoside 5'-triphosphate = RNA(n+1) + diphosphate. Functionally, promotes RNA polymerase assembly. Latches the N- and C-terminal regions of the beta' subunit thereby facilitating its interaction with the beta and alpha subunits. The protein is DNA-directed RNA polymerase subunit omega of Shewanella sp. (strain ANA-3).